The sequence spans 508 residues: Photosystem II CP47 reaction center protein (508 aa).

A run of 6 helical transmembrane segments spans residues 21–36 (AVHI…WAGS), 101–115 (IVFS…IWHW), 140–156 (GIHL…FGAF), 203–218 (IAAG…FHLS), 237–252 (VLSS…AFVV), and 457–472 (TFAL…HGAR).

It belongs to the PsbB/PsbC family. PsbB subfamily. PSII is composed of 1 copy each of membrane proteins PsbA, PsbB, PsbC, PsbD, PsbE, PsbF, PsbH, PsbI, PsbJ, PsbK, PsbL, PsbM, PsbT, PsbX, PsbY, PsbZ, Psb30/Ycf12, at least 3 peripheral proteins of the oxygen-evolving complex and a large number of cofactors. It forms dimeric complexes. The cofactor is Binds multiple chlorophylls. PSII binds additional chlorophylls, carotenoids and specific lipids..

The protein resides in the plastid. The protein localises to the chloroplast thylakoid membrane. Its function is as follows. One of the components of the core complex of photosystem II (PSII). It binds chlorophyll and helps catalyze the primary light-induced photochemical processes of PSII. PSII is a light-driven water:plastoquinone oxidoreductase, using light energy to abstract electrons from H(2)O, generating O(2) and a proton gradient subsequently used for ATP formation. This Agrostis stolonifera (Creeping bentgrass) protein is Photosystem II CP47 reaction center protein.